A 389-amino-acid chain; its full sequence is Cellobiose 2-epimerase (389 aa).

The protein belongs to the cellobiose 2-epimerase family.

The enzyme catalyses D-cellobiose = beta-D-glucosyl-(1-&gt;4)-D-mannopyranose. In terms of biological role, catalyzes the reversible epimerization of cellobiose to 4-O-beta-D-glucopyranosyl-D-mannose (Glc-Man). In Ruminococcus albus (strain ATCC 27210 / DSM 20455 / JCM 14654 / NCDO 2250 / 7), this protein is Cellobiose 2-epimerase.